Reading from the N-terminus, the 280-residue chain is Phosphatidylglycerol--prolipoprotein diacylglyceryl transferase (280 aa).

The next 2 membrane-spanning stretches (helical) occupy residues 59 to 79 and 97 to 117; these read FLTW…ILFY and GGMS…LFTW. Arg142 provides a ligand contact to a 1,2-diacyl-sn-glycero-3-phospho-(1'-sn-glycerol). 2 consecutive transmembrane segments (helical) span residues 207–227 and 233–253; these read GFLA…CECF and FIGF…PMAI.

The protein belongs to the Lgt family.

The protein localises to the cell inner membrane. The catalysed reaction is L-cysteinyl-[prolipoprotein] + a 1,2-diacyl-sn-glycero-3-phospho-(1'-sn-glycerol) = an S-1,2-diacyl-sn-glyceryl-L-cysteinyl-[prolipoprotein] + sn-glycerol 1-phosphate + H(+). It functions in the pathway protein modification; lipoprotein biosynthesis (diacylglyceryl transfer). In terms of biological role, catalyzes the transfer of the diacylglyceryl group from phosphatidylglycerol to the sulfhydryl group of the N-terminal cysteine of a prolipoprotein, the first step in the formation of mature lipoproteins. In Gluconacetobacter diazotrophicus (strain ATCC 49037 / DSM 5601 / CCUG 37298 / CIP 103539 / LMG 7603 / PAl5), this protein is Phosphatidylglycerol--prolipoprotein diacylglyceryl transferase.